The primary structure comprises 2179 residues: Voltage-dependent L-type calcium channel subunit alpha-1D (2179 aa).

3 disordered regions span residues 1–21 (MMMMMMMKKMQHQRQHQEDHA), 30–49 (TRLPISGEGPTSQPNSSKQT), and 64–100 (KAAQTMSTSAPPPVGSLSQRKRQQYAKSKKQGNSSNS). Topologically, residues 1–126 (MMMMMMMKKM…RACISIVEWK (126 aa)) are cytoplasmic. Polar residues predominate over residues 38–49 (GPTSQPNSSKQT). The span at 82–93 (QRKRQQYAKSKK) shows a compositional bias: basic residues. The stretch at 113-409 (NPIRRACISI…LVLGVLSGEF (297 aa)) is one I repeat. The helical transmembrane segment at 127–145 (PFDIFILLAIFANCVALAI) threads the bilayer. Residues 146 to 163 (YIPFPEDDSNSTNHNLEK) lie on the Extracellular side of the membrane. Residues 164 to 183 (VEYAFLIIFTVETFLKIIAY) traverse the membrane as a helical segment. The Cytoplasmic portion of the chain corresponds to 184–195 (GLLLHPNAYVRN). A helical membrane pass occupies residues 196–214 (GWNLLDFVIVIVGLFSVIL). Over 215-235 (EQLTKETEGGNHSSGKSGGFD) the chain is Extracellular. The chain crosses the membrane as a helical span at residues 236 to 254 (VKALRAFRVLRPLRLVSGV). Residues 255–273 (PSLQVVLNSIIKAMVPLLH) lie on the Cytoplasmic side of the membrane. Residues 274-293 (IALLVLFVIIIYAIIGLELF) traverse the membrane as a helical segment. Topologically, residues 294-381 (IGKMHKTCFF…WVNDAIGWEW (88 aa)) are extracellular. Glutamate 364 is a Ca(2+) binding site. Residues 382–406 (PWVYFVSLIILGSFFVLNLVLGVLS) traverse the membrane as a helical segment. Residues 407-543 (GEFSKEREKA…RRCRAAVKSV (137 aa)) are Cytoplasmic-facing. Positions 429-446 (QQLEEDLKGYLDWITQAE) are binding to the beta subunit. The tract at residues 449 to 480 (DPENEEEGGEEGKRNTSMPTSETESVNTENVS) is disordered. The span at 463–479 (NTSMPTSETESVNTENV) shows a compositional bias: polar residues. One copy of the II repeat lies at 529–775 (NRFNRRRCRA…VFLAIAVDNL (247 aa)). Residues 544 to 563 (TFYWLVIVLVFLNTLTISSE) traverse the membrane as a helical segment. The Extracellular segment spans residues 564-578 (HYNQPDWLTQIQDIA). Residues 579–597 (NKVLLALFTCEMLVKMYSL) traverse the membrane as a helical segment. Residues 598–605 (GLQAYFVS) are Cytoplasmic-facing. A helical transmembrane segment spans residues 606–624 (LFNRFDCFVVCGGITETIL). The Extracellular segment spans residues 625–634 (VELELMSPLG). A helical membrane pass occupies residues 635-653 (VSVFRCVRLLRIFKVTRHW). Residues 654–672 (TSLSNLVASLLNSMKSIAS) are Cytoplasmic-facing. The helical transmembrane segment at 673–693 (LLLLLFLFIIIFSLLGMQLFG) threads the bilayer. Residues 694–747 (GKFNFDETQTKRSTFDNFPQALLTVFQILTGEDWNAVMYDGIMAYGGPSSSGMI) are Extracellular-facing. Residue glutamate 725 coordinates Ca(2+). A helical transmembrane segment spans residues 748-772 (VCIYFIILFICGNYILLNVFLAIAV). The stretch at 771–810 (AVDNLADAESLNTAQKEEAEEKERKKIARKESLENKKNNK) forms a coiled coil. The Cytoplasmic segment spans residues 773 to 906 (DNLADAESLN…VGCHKLINHH (134 aa)). Positions 786–810 (KEEAEEKERKKIARKESLENKKNNK) are enriched in basic and acidic residues. The segment at 786-870 (KEEAEEKERK…AGPRPRRISE (85 aa)) is disordered. Residues 811–822 (PEVNQIANSDNK) show a composition bias toward polar residues. Positions 845–858 (VGEEEEEEEEDEPE) are enriched in acidic residues. An III repeat occupies 893 to 1175 (NPIRVGCHKL…IFVGFVIVTF (283 aa)). Residues 907-925 (IFTNLILVFIMLSSAALAA) traverse the membrane as a helical segment. The Extracellular portion of the chain corresponds to 926-941 (EDPIRSHSFRNTILGY). The chain crosses the membrane as a helical span at residues 942 to 961 (FDYAFTAIFTVEILLKMTTF). The Cytoplasmic portion of the chain corresponds to 962 to 973 (GAFLHKGAFCRN). The helical transmembrane segment at 974–992 (YFNLLDMLVVGVSLVSFGI) threads the bilayer. The Extracellular portion of the chain corresponds to 993-998 (QSSAIS). The helical transmembrane segment at 999 to 1018 (VVKILRVLRVLRPLRAINRA) threads the bilayer. The Cytoplasmic portion of the chain corresponds to 1019–1037 (KGLKHVVQCVFVAIRTIGN). The chain crosses the membrane as a helical span at residues 1038–1057 (IMIVTTLLQFMFACIGVQLF). Residues 1058–1147 (KGKFYRCTDE…VGPVYNYRVE (90 aa)) lie on the Extracellular side of the membrane. The segment at 1095–1185 (RIWQNSDFNF…QEQGEKEYKN (91 aa)) is dihydropyridine binding. Glutamate 1121 is a Ca(2+) binding site. Residues 1148–1168 (ISIFFIIYIIIVAFFMMNIFV) traverse the membrane as a helical segment. Topologically, residues 1169-1225 (GFVIVTFQEQGEKEYKNCELDKNQRQCVEYALKARPLRRYIPKNPYQYKFWYVVNSS) are cytoplasmic. One copy of the IV repeat lies at 1212-1487 (NPYQYKFWYV…LFVAVIMDNF (276 aa)). A helical membrane pass occupies residues 1226-1244 (PFEYMMFVLIMLNTLCLAM). Topologically, residues 1245–1259 (QHYEQSKMFNDAMDI) are extracellular. Residues 1260–1279 (LNMVFTGVFTVEMVLKVIAF) traverse the membrane as a helical segment. The Cytoplasmic segment spans residues 1280–1286 (KPKGYFS). A helical transmembrane segment spans residues 1287-1308 (DAWNTFDSLIVIGSIIDVALSE). Residues 1309–1333 (ADPSESETIPLPTATPGNSEESNRI) lie on the Extracellular side of the membrane. A helical transmembrane segment spans residues 1334-1353 (SITFFRLFRVMRLVKLLSRG). Residues 1354–1372 (EGIRTLLWTFIKSFQALPY) lie on the Cytoplasmic side of the membrane. A helical transmembrane segment spans residues 1373 to 1392 (VALLIAMLFFIYAVIGMQMF). Over 1393–1459 (GKVAMRDNNQ…GEEYTCGSNF (67 aa)) the chain is Extracellular. A dihydropyridine binding region spans residues 1440–1506 (LCDPDSDYNP…LGPHHLDEFK (67 aa)). A phenylalkylamine binding region spans residues 1452–1495 (EYTCGSNFAIVYFISFYMLCAFLIINLFVAVIMDNFDYLTRDWS). The helical transmembrane segment at 1460–1484 (AIVYFISFYMLCAFLIINLFVAVIM) threads the bilayer. Residues 1485–2179 (DNFDYLTRDW…ADEMICITTL (695 aa)) are Cytoplasmic-facing. Disordered stretches follow at residues 1704–1789 (LLGN…AHGK), 1896–1941 (FERP…RSSF), and 2135–2171 (GDMGPISHRQDYELQDFGPGYSDEEPDPGREEEDLAD). A compositionally biased stretch (polar residues) spans 1764–1782 (SIGKQAPTSTNANLNNANM). Residues 2156-2171 (SDEEPDPGREEEDLAD) show a composition bias toward acidic residues.

It belongs to the calcium channel alpha-1 subunit (TC 1.A.1.11) family. CACNA1D subfamily. Voltage-dependent calcium channels are multisubunit complexes, consisting of alpha-1, alpha-2, beta and delta subunits in a 1:1:1:1 ratio. The channel activity is directed by the pore-forming and voltage-sensitive alpha-1 subunit. In many cases, this subunit is sufficient to generate voltage-sensitive calcium channel activity. The auxiliary subunits beta and alpha-2/delta linked by a disulfide bridge regulate the channel activity. Interacts (via IQ domain) with CABP1 and CABP4 in a calcium independent manner. Interacts with RIMBP2. As to expression, expressed in the inner hair cells (IHC) of the cochlea.

It is found in the membrane. The enzyme catalyses Ca(2+)(in) = Ca(2+)(out). Voltage-sensitive calcium channels (VSCC) mediate the entry of calcium ions into excitable cells and are also involved in a variety of calcium-dependent processes, including muscle contraction, hormone or neurotransmitter release, gene expression, cell motility, cell division and cell death. The isoform alpha-1D gives rise to L-type calcium currents. Long-lasting (L-type) calcium channels belong to the 'high-voltage activated' (HVA) group. They are blocked by dihydropyridines (DHP), phenylalkylamines, and by benzothiazepines. This chain is Voltage-dependent L-type calcium channel subunit alpha-1D (Cacna1d), found in Mus musculus (Mouse).